A 267-amino-acid chain; its full sequence is tRNA pseudouridine synthase A (267 aa).

Residue aspartate 51 is the Nucleophile of the active site. Tyrosine 109 lines the substrate pocket.

The protein belongs to the tRNA pseudouridine synthase TruA family. Homodimer.

It catalyses the reaction uridine(38/39/40) in tRNA = pseudouridine(38/39/40) in tRNA. In terms of biological role, formation of pseudouridine at positions 38, 39 and 40 in the anticodon stem and loop of transfer RNAs. This Staphylococcus epidermidis (strain ATCC 12228 / FDA PCI 1200) protein is tRNA pseudouridine synthase A.